Reading from the N-terminus, the 243-residue chain is Terpene cyclase dpmpB (243 aa).

7 helical membrane passes run 13–33, 51–71, 78–98, 112–132, 141–161, 169–189, and 207–227; these read FLEVAWLADACKLLMGVGWTA, ALMPLCCNFAWELVYALILPF, WVHVTGLAFNCGVMYTAIKFA, LTWIFIASVAGWMSAHLALAA, AWSAYGCQLLLSVGGLCQLLC, SYLLWFSRFFGSLVLIPQDIL, and LWFVSIFLILDGSYGILLWYV.

It belongs to the paxB family.

The protein localises to the membrane. It functions in the pathway secondary metabolite biosynthesis; terpenoid biosynthesis. In terms of biological role, terpene cyclase; part of the gene cluster that mediates the biosynthesis of diterpenoid pyrones. The first step of the pathway is the synthesis of the alpha-pyrone moiety by the polyketide synthase dpmpA via condensation of one acetyl-CoA starter unit with 3 malonyl-CoA units and 2 methylations. The alpha-pyrone is then combined with geranylgeranyl pyrophosphate (GGPP) formed by the GGPP synthase dpmpD through the action of the prenyltransferase dpmpC to yield a linear alpha-pyrone diterpenoid. Subsequent steps in the diterpenoid pyrone biosynthetic pathway involve the decalin core formation, which is initiated by the epoxidation of the C10-C11 olefin by the FAD-dependent oxidoreductase dpmpE, and is followed by a cyclization cascade catalyzed by the terpene cyclase dpmpB. The short chain dehydrogenase/reductase dpmpG then oxidizes the 8S hydroxy group to a ketone and the short chain dehydrogenase/reductase dpmpH reduces the ketone to the 8R hydroxy group to yield higginsianin B. Higginsianin B is further methylated by the methyltransferase dpmpI to produce the intermediate named FDDP B. The cytochrome P450 monooxygenase dpmpJ then oxidizes the C-26 methyl to primary alcohol, producing the final diterpenoid pyrone with a C-26 primary alcohol on the gamma-pyrone moiety named FDDP C. The polypeptide is Terpene cyclase dpmpB (Macrophomina phaseolina (strain MS6) (Charcoal rot fungus)).